Consider the following 159-residue polypeptide: Ribosomal RNA large subunit methyltransferase H (159 aa).

S-adenosyl-L-methionine contacts are provided by residues Leu-76, Gly-108, and 127 to 132 (FSKMTF).

This sequence belongs to the RNA methyltransferase RlmH family. As to quaternary structure, homodimer.

It localises to the cytoplasm. The catalysed reaction is pseudouridine(1915) in 23S rRNA + S-adenosyl-L-methionine = N(3)-methylpseudouridine(1915) in 23S rRNA + S-adenosyl-L-homocysteine + H(+). Its function is as follows. Specifically methylates the pseudouridine at position 1915 (m3Psi1915) in 23S rRNA. This Lachnoclostridium phytofermentans (strain ATCC 700394 / DSM 18823 / ISDg) (Clostridium phytofermentans) protein is Ribosomal RNA large subunit methyltransferase H.